Here is a 95-residue protein sequence, read N- to C-terminus: MEYSYPFSTDWSTEEIVDVVQFFEGIEQAHEKGIKREVMMAKYRRFKEIVPSQAEEKTIFREFEEASGYISYPVVKQTKEAADGTIIKIVPKKNR.

Belongs to the UPF0223 family.

In Lysinibacillus sphaericus (strain C3-41), this protein is UPF0223 protein Bsph_1378.